We begin with the raw amino-acid sequence, 150 residues long: Transthyretin (150 aa).

The N-terminal stretch at 1-20 (MASYRLLLLCLAGLVFVSEA) is a signal peptide. A Sulfocysteine modification is found at Cys-30. Lys-35 contacts L-thyroxine. Glu-62 carries the 4-carboxyglutamate modification. L-thyroxine is bound at residue Glu-74. A glycan (N-linked (GlcNAc...) asparagine) is linked at Asn-118. Ser-137 is an L-thyroxine binding site.

It belongs to the transthyretin family. As to quaternary structure, homotetramer. Dimer of dimers. In the homotetramer, subunits assemble around a central channel that can accommodate two ligand molecules. Interacts with RBP4. Sulfonation of the reactive cysteine Cys-30 enhances the stability of the native conformation of TTR, avoiding misassembly of the protein leading to amyloid formation. In terms of tissue distribution, detected in plasma and cerebrospinal fluid (at protein level). Highly expressed in the choroid plexus. Detected in liver.

It localises to the secreted. Thyroid hormone-binding protein. Probably transports thyroxine from the bloodstream to the brain. This Sus scrofa (Pig) protein is Transthyretin (TTR).